The following is a 119-amino-acid chain: uncharacterized protein (119 aa).

The segment at 1-20 is disordered; the sequence is MPHLAAEAHTWPPHISHSTL. The chain crosses the membrane as a helical span at residues 74 to 94; sequence LLFVVHQGHIGTGLIVFIICW.

The protein resides in the membrane. This is an uncharacterized protein from Saccharomyces cerevisiae (strain ATCC 204508 / S288c) (Baker's yeast).